The chain runs to 376 residues: DNA-directed RNA polymerase subunit alpha (376 aa).

The alpha N-terminal domain (alpha-NTD) stretch occupies residues 1–259 (MSDCSQNLLY…KHFSIFEKMD (259 aa)). The tract at residues 276-376 (KDDILHKLVL…DKIRSKNGKG (101 aa)) is alpha C-terminal domain (alpha-CTD).

This sequence belongs to the RNA polymerase alpha chain family. Homodimer. The RNAP catalytic core consists of 2 alpha, 1 beta, 1 beta' and 1 omega subunit. When a sigma factor is associated with the core the holoenzyme is formed, which can initiate transcription.

It carries out the reaction RNA(n) + a ribonucleoside 5'-triphosphate = RNA(n+1) + diphosphate. Its function is as follows. DNA-dependent RNA polymerase catalyzes the transcription of DNA into RNA using the four ribonucleoside triphosphates as substrates. The sequence is that of DNA-directed RNA polymerase subunit alpha from Chlamydia abortus (strain DSM 27085 / S26/3) (Chlamydophila abortus).